A 76-amino-acid chain; its full sequence is Small ribosomal subunit protein bS16c (76 aa).

This sequence belongs to the bacterial ribosomal protein bS16 family.

It localises to the plastid. The protein resides in the chloroplast. The sequence is that of Small ribosomal subunit protein bS16c from Guillardia theta (Cryptophyte).